Reading from the N-terminus, the 237-residue chain is Riboflavin kinase (237 aa).

The disordered stretch occupies residues 1–23 (MSLPNPDNRPLLIGPPTGPEAPF). Positions 46 and 48 each coordinate Mg(2+). Positions 82-126 (VLYQKPPTSEPVMMDPVQQQQQQQQQQRNQQQQQEGGVGSAQQEK) are disordered. Positions 99 to 115 (QQQQQQQQQQRNQQQQQ) are enriched in low complexity. Catalysis depends on glutamate 158, which acts as the Nucleophile.

This sequence belongs to the flavokinase family. It depends on Zn(2+) as a cofactor. Mg(2+) is required as a cofactor.

It carries out the reaction riboflavin + ATP = FMN + ADP + H(+). It participates in cofactor biosynthesis; FMN biosynthesis; FMN from riboflavin (ATP route): step 1/1. Functionally, catalyzes the phosphorylation of riboflavin (vitamin B2) to form flavin mononucleotide (FMN) coenzyme. The polypeptide is Riboflavin kinase (fmn1) (Neurospora crassa (strain ATCC 24698 / 74-OR23-1A / CBS 708.71 / DSM 1257 / FGSC 987)).